A 520-amino-acid polypeptide reads, in one-letter code: Cytosol aminopeptidase (520 aa).

Residues leucine 200, methionine 201, lysine 280, and aspartate 285 each contribute to the Zn(2+) site. The substrate site is built by lysine 280, aspartate 285, serine 290, and lysine 292. A Mg(2+)-binding site is contributed by aspartate 285. Lysine 292 is an active-site residue. The Zn(2+) site is built by arginine 301, aspartate 303, aspartate 362, and glutamate 364. Residues aspartate 303 and aspartate 362 each contribute to the substrate site. Residues aspartate 362 and glutamate 364 each contribute to the Mg(2+) site. Arginine 366 is a catalytic residue.

This sequence belongs to the peptidase M17 family. In terms of assembly, homohexamer. It depends on Zn(2+) as a cofactor. Requires Mn(2+) as cofactor.

It is found in the cytoplasm. The catalysed reaction is Release of an N-terminal amino acid, Xaa-|-Yaa-, in which Xaa is preferably Leu, but may be other amino acids including Pro although not Arg or Lys, and Yaa may be Pro. Amino acid amides and methyl esters are also readily hydrolyzed, but rates on arylamides are exceedingly low.. It catalyses the reaction an S-substituted L-cysteinylglycine + H2O = an S-substituted L-cysteine + glycine. It carries out the reaction L-cysteinylglycine + H2O = L-cysteine + glycine. The enzyme catalyses S-benzyl-L-cysteinylglycine + H2O = S-benzyl-L-cysteine + glycine. The catalysed reaction is Release of N-terminal proline from a peptide.. Its function is as follows. Cytosolic metallopeptidase that catalyzes the removal of unsubstituted N-terminal hydrophobic amino acids from various peptides. The presence of Zn(2+) ions is essential for the peptidase activity, and the association with other cofactors can modulate the substrate spectificity of the enzyme. For instance, in the presence of Mn(2+), it displays a specific Cys-Gly hydrolyzing activity of Cys-Gly-S-conjugates. Involved in the metabolism of glutathione and in the degradation of glutathione S-conjugates, which may play a role in the control of the cell redox status. This Xenopus tropicalis (Western clawed frog) protein is Cytosol aminopeptidase (lap3).